A 138-amino-acid polypeptide reads, in one-letter code: MINKTRHNARRYALQALYQWFFCETKPDALISQFMEEHDLSDTDVAYFKEVVTGTIQHVAIIDELMTAHLDRKISALNPVELSVLRLSIYELLHRKEVPYKVVIDEALELVKEFGAEAGHKYVNAILDVLSSEIRKGV.

The protein belongs to the NusB family.

Its function is as follows. Involved in transcription antitermination. Required for transcription of ribosomal RNA (rRNA) genes. Binds specifically to the boxA antiterminator sequence of the ribosomal RNA (rrn) operons. The chain is Transcription antitermination protein NusB from Coxiella burnetii (strain Dugway 5J108-111).